An 878-amino-acid chain; its full sequence is Alanine--tRNA ligase (878 aa).

His564, His568, Cys665, and His669 together coordinate Zn(2+).

It belongs to the class-II aminoacyl-tRNA synthetase family. It depends on Zn(2+) as a cofactor.

The protein localises to the cytoplasm. The catalysed reaction is tRNA(Ala) + L-alanine + ATP = L-alanyl-tRNA(Ala) + AMP + diphosphate. Its function is as follows. Catalyzes the attachment of alanine to tRNA(Ala) in a two-step reaction: alanine is first activated by ATP to form Ala-AMP and then transferred to the acceptor end of tRNA(Ala). Also edits incorrectly charged Ser-tRNA(Ala) and Gly-tRNA(Ala) via its editing domain. The sequence is that of Alanine--tRNA ligase from Natranaerobius thermophilus (strain ATCC BAA-1301 / DSM 18059 / JW/NM-WN-LF).